The following is a 106-amino-acid chain: Adipokinetic hormone/corazonin-related peptide (106 aa).

An N-terminal signal peptide occupies residues 1-25; sequence MRNSIYKLIMFAVLCMVLTSSLSYA. Residue Q26 is modified to Pyrrolidone carboxylic acid. A35 bears the Alanine amide mark. Positions 39 to 106 are excised as a propeptide; the sequence is SLAEAAQSTG…GLPLFSNGHL (68 aa).

The protein belongs to the AKH/HRTH/RPCH family. As to expression, only expressed in the head and thorax body segments of adults. Is more expressed in adult males than in females.

The protein resides in the secreted. Functionally, neuropeptide with neuromodulator or neurotransmitter role that activates the adipokinetic hormone/corazonin-related peptide receptor (ACPR). May function in regulation of post-ecdysis activities. Does not activate the A.gambiae adipokinetic hormone (AKH) and corazonin (CRZ) receptors. In Aedes aegypti (Yellowfever mosquito), this protein is Adipokinetic hormone/corazonin-related peptide.